We begin with the raw amino-acid sequence, 320 residues long: Mycothiol acetyltransferase (320 aa).

N-acetyltransferase domains follow at residues serine 8–arginine 141 and leucine 152–alanine 320. Glutamate 36 is a binding site for 1D-myo-inositol 2-(L-cysteinylamino)-2-deoxy-alpha-D-glucopyranoside. Residues leucine 80–valine 82 and arginine 88–threonine 93 contribute to the acetyl-CoA site. Glutamate 179, lysine 229, and glutamate 239 together coordinate 1D-myo-inositol 2-(L-cysteinylamino)-2-deoxy-alpha-D-glucopyranoside. Acetyl-CoA contacts are provided by residues leucine 243–valine 245 and glutamine 250–arginine 256. Residue tyrosine 284 participates in 1D-myo-inositol 2-(L-cysteinylamino)-2-deoxy-alpha-D-glucopyranoside binding. Asparagine 289 to arginine 294 provides a ligand contact to acetyl-CoA.

Belongs to the acetyltransferase family. MshD subfamily. As to quaternary structure, monomer.

The enzyme catalyses 1D-myo-inositol 2-(L-cysteinylamino)-2-deoxy-alpha-D-glucopyranoside + acetyl-CoA = mycothiol + CoA + H(+). In terms of biological role, catalyzes the transfer of acetyl from acetyl-CoA to desacetylmycothiol (Cys-GlcN-Ins) to form mycothiol. The protein is Mycothiol acetyltransferase of Mycobacterium ulcerans (strain Agy99).